A 429-amino-acid chain; its full sequence is Adenylosuccinate synthetase (429 aa).

GTP contacts are provided by residues 13 to 19 and 41 to 43; these read GDEGKGK and GHT. The active-site Proton acceptor is D14. 2 residues coordinate Mg(2+): D14 and G41. IMP contacts are provided by residues 14–17, 39–42, T130, R144, Q225, T240, and R304; these read DEGK and NAGH. The active-site Proton donor is H42. 300 to 306 contributes to the substrate binding site; sequence ATTGRAR. GTP is bound by residues R306, 332-334, and 414-416; these read KLD and STG.

Belongs to the adenylosuccinate synthetase family. In terms of assembly, homodimer. The cofactor is Mg(2+).

It is found in the cytoplasm. The catalysed reaction is IMP + L-aspartate + GTP = N(6)-(1,2-dicarboxyethyl)-AMP + GDP + phosphate + 2 H(+). It participates in purine metabolism; AMP biosynthesis via de novo pathway; AMP from IMP: step 1/2. Plays an important role in the de novo pathway of purine nucleotide biosynthesis. Catalyzes the first committed step in the biosynthesis of AMP from IMP. The protein is Adenylosuccinate synthetase of Acidithiobacillus ferrooxidans (Thiobacillus ferrooxidans).